The chain runs to 1420 residues: Mediator of RNA polymerase II transcription subunit 13 (1420 aa).

Phosphoserine occurs at positions 370, 375, and 425. The span at 416 to 427 shows a compositional bias: polar residues; it reads TTVSNDLENSPL. Positions 416–511 are disordered; the sequence is TTVSNDLENS…TNESNKSISD (96 aa). The span at 429-439 shows a compositional bias: basic and acidic residues; the sequence is TELEANGRSLE. Polar residues predominate over residues 440–453; it reads KVNNSVSKTGSVDT. The span at 454–484 shows a compositional bias: basic and acidic residues; that stretch reads LHNKEGTLEQREQNENLPSDKSDSMVDKELF. Low complexity predominate over residues 494-508; that stretch reads GDSNKSNSTNESNKS. Position 601 is a phosphothreonine (T601). Residue S608 is modified to Phosphoserine; by PKA. A Phosphoserine modification is found at S636. Residues 653–691 form a disordered region; the sequence is LSSSEEEEDEEENGSSDEDLKSLNVRDDMKPSDNISTNT. Residues 655 to 669 are compositionally biased toward acidic residues; that stretch reads SSEEEEDEEENGSSD. Basic and acidic residues predominate over residues 670–683; that stretch reads EDLKSLNVRDDMKP. S748 bears the Phosphoserine mark.

This sequence belongs to the Mediator complex subunit 13 family. Component of the SRB8-11 complex which consists of SRB8, SSN2/SRB9, SSN3/SRB10 and SSN8/SRB11. The SRB8-11 complex associates with the Mediator complex. The SSN3/SRB10 and SSN8/SRB11 kinase-cyclin pair also associate with the RNA polymerase II holoenzyme. Post-translationally, phosphorylated. PKA-dependent phosphorylation at 'Ser-608' is enhanced by activation of the RAS signaling pathway.

Its subcellular location is the nucleus. In terms of biological role, component of the SRB8-11 complex. The SRB8-11 complex is a regulatory module of the Mediator complex which is itself involved in regulation of basal and activated RNA polymerase II-dependent transcription. The SRB8-11 complex may be involved in the transcriptional repression of a subset of genes regulated by Mediator. It may inhibit the association of the Mediator complex with RNA polymerase II to form the holoenzyme complex. The SRB8-11 complex phosphorylates the C-terminal domain (CTD) of the largest subunit of RNA polymerase II RPB1 at serines 2 and 5. This chain is Mediator of RNA polymerase II transcription subunit 13 (SSN2), found in Saccharomyces cerevisiae (strain ATCC 204508 / S288c) (Baker's yeast).